Consider the following 303-residue polypeptide: N-acetyl-D-glucosamine kinase (303 aa).

ATP is bound by residues 4–11 and 133–140; these read GFDIGGTK and GVGGGLVL. H157, C177, C179, and C184 together coordinate Zn(2+).

Belongs to the ROK (NagC/XylR) family. NagK subfamily.

The enzyme catalyses N-acetyl-D-glucosamine + ATP = N-acetyl-D-glucosamine 6-phosphate + ADP + H(+). It functions in the pathway cell wall biogenesis; peptidoglycan recycling. Its function is as follows. Catalyzes the phosphorylation of N-acetyl-D-glucosamine (GlcNAc) derived from cell-wall degradation, yielding GlcNAc-6-P. This Salmonella arizonae (strain ATCC BAA-731 / CDC346-86 / RSK2980) protein is N-acetyl-D-glucosamine kinase.